A 433-amino-acid polypeptide reads, in one-letter code: Protoheme IX farnesyltransferase 2 (433 aa).

The tract at residues 1–164 is unknown; the sequence is MQRFTGLVTA…LTKPRLMWLL (164 aa). 13 helical membrane passes run 4–24, 35–55, 67–87, 95–115, 160–180, 184–204, 236–256, 257–277, 282–304, 308–330, 357–377, 378–398, and 413–433; these read FTGL…LGVA, AVAH…AAAL, WGVT…MAVL, LHLF…TWHL, LMWL…VTGA, GVTI…AGTF, AFGV…VNPL, AAAL…VVLK, WNTV…AVAG, LPAL…NLAI, ILYW…VAGF, GPVY…TVVV, and HASN…TMVI. Positions 165-430 are protoheme IX prenyltransferase; sequence CLLALSGMAL…ALLVAILVET (266 aa).

The protein in the C-terminal section; belongs to the UbiA prenyltransferase family. Protoheme IX farnesyltransferase subfamily.

It localises to the cell membrane. It catalyses the reaction heme b + (2E,6E)-farnesyl diphosphate + H2O = Fe(II)-heme o + diphosphate. The protein operates within porphyrin-containing compound metabolism; heme O biosynthesis; heme O from protoheme: step 1/1. In terms of biological role, converts heme B (protoheme IX) to heme O by substitution of the vinyl group on carbon 2 of heme B porphyrin ring with a hydroxyethyl farnesyl side group. This chain is Protoheme IX farnesyltransferase 2 (ctaB2), found in Natronomonas pharaonis (strain ATCC 35678 / DSM 2160 / CIP 103997 / JCM 8858 / NBRC 14720 / NCIMB 2260 / Gabara) (Halobacterium pharaonis).